Reading from the N-terminus, the 227-residue chain is MNIFNPNHDRKAIVIFSGGQDSTTCLFQAIAEYGKENIEAITFQYGQRHAIELEKARAIVQDLGIKQTLIDTSVMKAITHNALMDEQAHIEQKENELPNTFVDGRNALFLLYAAIYAKGQGIQDIITGVCETDFSGYPDCRDVFIKSMNVTLNLAMDYQFNIKTPLMYLTKAQTWQLADELGVLDYVQKHTHTCYEGIEGGCGKCPSCILRNKGLKKYLTQKGRKNV.

16–26 (FSGGQDSTTCL) contacts ATP. The Zn(2+) site is built by cysteine 194, cysteine 202, cysteine 205, and cysteine 208.

The protein belongs to the QueC family. The cofactor is Zn(2+).

It catalyses the reaction 7-carboxy-7-deazaguanine + NH4(+) + ATP = 7-cyano-7-deazaguanine + ADP + phosphate + H2O + H(+). Its pathway is purine metabolism; 7-cyano-7-deazaguanine biosynthesis. Its function is as follows. Catalyzes the ATP-dependent conversion of 7-carboxy-7-deazaguanine (CDG) to 7-cyano-7-deazaguanine (preQ(0)). The sequence is that of 7-cyano-7-deazaguanine synthase from Haemophilus influenzae (strain 86-028NP).